Consider the following 215-residue polypeptide: 3-demethoxyubiquinol 3-hydroxylase (215 aa).

Fe cation is bound by residues glutamate 64, glutamate 94, histidine 97, glutamate 146, glutamate 178, and histidine 181.

Belongs to the COQ7 family. The cofactor is Fe cation.

The protein resides in the cell membrane. It catalyses the reaction a 5-methoxy-2-methyl-3-(all-trans-polyprenyl)benzene-1,4-diol + AH2 + O2 = a 3-demethylubiquinol + A + H2O. It participates in cofactor biosynthesis; ubiquinone biosynthesis. Catalyzes the hydroxylation of 2-nonaprenyl-3-methyl-6-methoxy-1,4-benzoquinol during ubiquinone biosynthesis. The polypeptide is 3-demethoxyubiquinol 3-hydroxylase (Coxiella burnetii (strain Dugway 5J108-111)).